Here is a 347-residue protein sequence, read N- to C-terminus: Succinylglutamate desuccinylase (347 aa).

The Zn(2+) site is built by His-64, Glu-67, and His-159. Glu-222 is an active-site residue.

The protein belongs to the AspA/AstE family. Succinylglutamate desuccinylase subfamily. Zn(2+) serves as cofactor.

The enzyme catalyses N-succinyl-L-glutamate + H2O = L-glutamate + succinate. It functions in the pathway amino-acid degradation; L-arginine degradation via AST pathway; L-glutamate and succinate from L-arginine: step 5/5. Functionally, transforms N(2)-succinylglutamate into succinate and glutamate. The protein is Succinylglutamate desuccinylase of Burkholderia cenocepacia (strain ATCC BAA-245 / DSM 16553 / LMG 16656 / NCTC 13227 / J2315 / CF5610) (Burkholderia cepacia (strain J2315)).